Here is a 268-residue protein sequence, read N- to C-terminus: Large ribosomal subunit protein uL4 (268 aa).

Belongs to the universal ribosomal protein uL4 family. As to quaternary structure, part of the 50S ribosomal subunit.

In terms of biological role, one of the primary rRNA binding proteins, this protein initially binds near the 5'-end of the 23S rRNA. It is important during the early stages of 50S assembly. It makes multiple contacts with different domains of the 23S rRNA in the assembled 50S subunit and ribosome. Forms part of the polypeptide exit tunnel. The chain is Large ribosomal subunit protein uL4 from Nanoarchaeum equitans (strain Kin4-M).